A 76-amino-acid polypeptide reads, in one-letter code: Conotoxin Cl6.4 (76 aa).

The first 19 residues, 1 to 19 (MTLTFLLVVALCMLTTCHT), serve as a signal peptide directing secretion. A propeptide spanning residues 20 to 47 (ENYRDSQKVSPVRSIGKTQFARSLRLSE) is cleaved from the precursor. Disulfide bonds link Cys-50–Cys-66, Cys-57–Cys-70, and Cys-65–Cys-75.

In terms of tissue distribution, expressed by the venom duct.

The protein resides in the secreted. This Californiconus californicus (California cone) protein is Conotoxin Cl6.4.